The chain runs to 268 residues: Tryptophan synthase alpha chain (268 aa).

Residues Glu-49 and Asp-60 each act as proton acceptor in the active site.

This sequence belongs to the TrpA family. Tetramer of two alpha and two beta chains.

It catalyses the reaction (1S,2R)-1-C-(indol-3-yl)glycerol 3-phosphate + L-serine = D-glyceraldehyde 3-phosphate + L-tryptophan + H2O. The protein operates within amino-acid biosynthesis; L-tryptophan biosynthesis; L-tryptophan from chorismate: step 5/5. The alpha subunit is responsible for the aldol cleavage of indoleglycerol phosphate to indole and glyceraldehyde 3-phosphate. This is Tryptophan synthase alpha chain from Escherichia coli O17:K52:H18 (strain UMN026 / ExPEC).